The chain runs to 210 residues: Outer-membrane lipoprotein carrier protein (210 aa).

An N-terminal signal peptide occupies residues 1–23 (MKKRIQKTILTVLFSSLSSIAFA).

It belongs to the LolA family. In terms of assembly, monomer.

It localises to the periplasm. Functionally, participates in the translocation of lipoproteins from the inner membrane to the outer membrane. Only forms a complex with a lipoprotein if the residue after the N-terminal Cys is not an aspartate (The Asp acts as a targeting signal to indicate that the lipoprotein should stay in the inner membrane). In Haemophilus ducreyi (strain 35000HP / ATCC 700724), this protein is Outer-membrane lipoprotein carrier protein.